Here is a 61-residue protein sequence, read N- to C-terminus: Small ribosomal subunit protein uS14 (61 aa).

Zn(2+) contacts are provided by Cys24, Cys27, Cys40, and Cys43.

Belongs to the universal ribosomal protein uS14 family. Zinc-binding uS14 subfamily. As to quaternary structure, part of the 30S ribosomal subunit. Contacts proteins S3 and S10. Requires Zn(2+) as cofactor.

Its function is as follows. Binds 16S rRNA, required for the assembly of 30S particles and may also be responsible for determining the conformation of the 16S rRNA at the A site. In Treponema pallidum (strain Nichols), this protein is Small ribosomal subunit protein uS14.